A 135-amino-acid polypeptide reads, in one-letter code: Small ribosomal subunit protein uS11 (135 aa).

It belongs to the universal ribosomal protein uS11 family. As to quaternary structure, part of the 30S ribosomal subunit. Interacts with proteins S7 and S18. Binds to IF-3.

Functionally, located on the platform of the 30S subunit, it bridges several disparate RNA helices of the 16S rRNA. Forms part of the Shine-Dalgarno cleft in the 70S ribosome. This is Small ribosomal subunit protein uS11 from Cutibacterium acnes (strain DSM 16379 / KPA171202) (Propionibacterium acnes).